The chain runs to 399 residues: 1-deoxy-D-xylulose 5-phosphate reductoisomerase (399 aa).

The NADPH site is built by threonine 13, glycine 14, serine 15, isoleucine 16, and asparagine 127. Lysine 128 contacts 1-deoxy-D-xylulose 5-phosphate. Glutamate 129 contributes to the NADPH binding site. Residue aspartate 153 coordinates Mn(2+). Positions 154, 155, 187, and 210 each coordinate 1-deoxy-D-xylulose 5-phosphate. Mn(2+) is bound at residue glutamate 155. Glycine 216 contacts NADPH. Serine 223, asparagine 228, lysine 229, and glutamate 232 together coordinate 1-deoxy-D-xylulose 5-phosphate. Residue glutamate 232 participates in Mn(2+) binding.

This sequence belongs to the DXR family. It depends on Mg(2+) as a cofactor. The cofactor is Mn(2+).

The catalysed reaction is 2-C-methyl-D-erythritol 4-phosphate + NADP(+) = 1-deoxy-D-xylulose 5-phosphate + NADPH + H(+). Its pathway is isoprenoid biosynthesis; isopentenyl diphosphate biosynthesis via DXP pathway; isopentenyl diphosphate from 1-deoxy-D-xylulose 5-phosphate: step 1/6. Its function is as follows. Catalyzes the NADPH-dependent rearrangement and reduction of 1-deoxy-D-xylulose-5-phosphate (DXP) to 2-C-methyl-D-erythritol 4-phosphate (MEP). The sequence is that of 1-deoxy-D-xylulose 5-phosphate reductoisomerase from Bordetella avium (strain 197N).